The sequence spans 215 residues: Small ribosomal subunit protein uS7 (215 aa).

The protein belongs to the universal ribosomal protein uS7 family. In terms of assembly, part of the 30S ribosomal subunit.

One of the primary rRNA binding proteins, it binds directly to 16S rRNA where it nucleates assembly of the head domain of the 30S subunit. Is located at the subunit interface close to the decoding center. The protein is Small ribosomal subunit protein uS7 of Thermococcus celer.